Reading from the N-terminus, the 608-residue chain is Fatty acid amide hydrolase (608 aa).

Active-site charge relay system residues include lysine 206 and serine 282. 303-306 (GGGS) contacts substrate. Serine 306 acts as the Acyl-ester intermediate in catalysis.

The protein belongs to the amidase family. As to quaternary structure, forms homodimers.

The protein resides in the endoplasmic reticulum membrane. It is found in the cell membrane. It catalyses the reaction N-(9Z,12Z-octadecadienoyl)-ethanolamine + H2O = ethanolamine + (9Z,12Z)-octadecadienoate. The catalysed reaction is N-hexadecanoylethanolamine + H2O = ethanolamine + hexadecanoate. The enzyme catalyses N-dodecanoylethanolamine + H2O = dodecanoate + ethanolamine. Its activity is regulated as follows. Inhibited by methyl arachidonyl fluorophosphonate (MAFP). Its function is as follows. Catalyzes the hydrolysis of bioactive endogenous fatty acid amides to their corresponding acids. The hydrolysis of endogenous amidated lipids terminates their participation as lipid mediators in various signaling systems. Converts a wide range of N-acylethanolamines (NAEs) to their corresponding free fatty acids and ethanolamine. In Oryza sativa subsp. indica (Rice), this protein is Fatty acid amide hydrolase.